The chain runs to 142 residues: Hemoglobin subunit alpha-A (142 aa).

Residues Val-2–Arg-142 form the Globin domain. His-59 provides a ligand contact to O2. Heme b is bound at residue His-88.

It belongs to the globin family. Heterotetramer of two alpha chains and two beta chains. In terms of tissue distribution, red blood cells.

Functionally, involved in oxygen transport from the lung to the various peripheral tissues. This chain is Hemoglobin subunit alpha-A (HBAA), found in Ara ararauna (Blue-and-yellow macaw).